Here is a 205-residue protein sequence, read N- to C-terminus: Small ribosomal subunit protein uS4c (205 aa).

The segment at 22–42 (TSKISKKTNTPGEHGQPQNKL) is disordered. Residues 28-42 (KTNTPGEHGQPQNKL) show a composition bias toward polar residues. Positions 94–157 (MRLDNIVYRL…ASRDLVKKFV (64 aa)) constitute an S4 RNA-binding domain.

It belongs to the universal ribosomal protein uS4 family. Part of the 30S ribosomal subunit. Contacts protein S5. The interaction surface between S4 and S5 is involved in control of translational fidelity.

The protein localises to the plastid. The protein resides in the chloroplast. Functionally, one of the primary rRNA binding proteins, it binds directly to 16S rRNA where it nucleates assembly of the body of the 30S subunit. Its function is as follows. With S5 and S12 plays an important role in translational accuracy. The polypeptide is Small ribosomal subunit protein uS4c (rps4) (Tupiella akineta (Green alga)).